A 219-amino-acid polypeptide reads, in one-letter code: Probable nicotinate-nucleotide adenylyltransferase (219 aa).

It belongs to the NadD family.

It carries out the reaction nicotinate beta-D-ribonucleotide + ATP + H(+) = deamido-NAD(+) + diphosphate. It functions in the pathway cofactor biosynthesis; NAD(+) biosynthesis; deamido-NAD(+) from nicotinate D-ribonucleotide: step 1/1. In terms of biological role, catalyzes the reversible adenylation of nicotinate mononucleotide (NaMN) to nicotinic acid adenine dinucleotide (NaAD). This Pseudomonas entomophila (strain L48) protein is Probable nicotinate-nucleotide adenylyltransferase.